Reading from the N-terminus, the 88-residue chain is Co-chaperonin GroES (88 aa).

Belongs to the GroES chaperonin family. As to quaternary structure, heptamer of 7 subunits arranged in a ring. Interacts with the chaperonin GroEL.

It is found in the cytoplasm. Together with the chaperonin GroEL, plays an essential role in assisting protein folding. The GroEL-GroES system forms a nano-cage that allows encapsulation of the non-native substrate proteins and provides a physical environment optimized to promote and accelerate protein folding. GroES binds to the apical surface of the GroEL ring, thereby capping the opening of the GroEL channel. This chain is Co-chaperonin GroES, found in Rubrobacter xylanophilus (strain DSM 9941 / JCM 11954 / NBRC 16129 / PRD-1).